The chain runs to 601 residues: Aspartate--tRNA ligase (601 aa).

Residue glutamate 183 coordinates L-aspartate. The segment at 207–210 is aspartate; the sequence is QIFK. Arginine 229 serves as a coordination point for L-aspartate. Residues 229–231 and glutamine 238 each bind ATP; that span reads RDE. Histidine 457 is a binding site for L-aspartate. Glutamate 497 contributes to the ATP binding site. An L-aspartate-binding site is contributed by arginine 504. ATP is bound at residue 549–552; that stretch reads GIDR.

Belongs to the class-II aminoacyl-tRNA synthetase family. Type 1 subfamily. In terms of assembly, homodimer.

It localises to the cytoplasm. It carries out the reaction tRNA(Asp) + L-aspartate + ATP = L-aspartyl-tRNA(Asp) + AMP + diphosphate. Catalyzes the attachment of L-aspartate to tRNA(Asp) in a two-step reaction: L-aspartate is first activated by ATP to form Asp-AMP and then transferred to the acceptor end of tRNA(Asp). The protein is Aspartate--tRNA ligase of Leptospira interrogans serogroup Icterohaemorrhagiae serovar copenhageni (strain Fiocruz L1-130).